Here is a 440-residue protein sequence, read N- to C-terminus: Trigger factor (440 aa).

A PPIase FKBP-type domain is found at 163-248; that stretch reads GDILTVDFLG…AKALKRRVAP (86 aa).

It belongs to the FKBP-type PPIase family. Tig subfamily.

Its subcellular location is the cytoplasm. The enzyme catalyses [protein]-peptidylproline (omega=180) = [protein]-peptidylproline (omega=0). In terms of biological role, involved in protein export. Acts as a chaperone by maintaining the newly synthesized protein in an open conformation. Functions as a peptidyl-prolyl cis-trans isomerase. The chain is Trigger factor from Acidiphilium cryptum (strain JF-5).